The chain runs to 93 residues: uncharacterized protein (93 aa).

The 62-residue stretch at 24 to 85 (QLQVGDTLKL…IQTQVGRLFF (62 aa)) folds into the TRAM domain.

This sequence belongs to the ycf81 family.

This is an uncharacterized protein from Thermus thermophilus.